A 255-amino-acid chain; its full sequence is Ribonuclease PH (255 aa).

Phosphate-binding positions include arginine 86 and 124-126 (GTR).

It belongs to the RNase PH family. As to quaternary structure, homohexameric ring arranged as a trimer of dimers.

The enzyme catalyses tRNA(n+1) + phosphate = tRNA(n) + a ribonucleoside 5'-diphosphate. Functionally, phosphorolytic 3'-5' exoribonuclease that plays an important role in tRNA 3'-end maturation. Removes nucleotide residues following the 3'-CCA terminus of tRNAs; can also add nucleotides to the ends of RNA molecules by using nucleoside diphosphates as substrates, but this may not be physiologically important. Probably plays a role in initiation of 16S rRNA degradation (leading to ribosome degradation) during starvation. The protein is Ribonuclease PH of Hydrogenobaculum sp. (strain Y04AAS1).